Consider the following 219-residue polypeptide: Small ribosomal subunit protein uS3c (219 aa).

The KH type-2 domain maps to 47–119; the sequence is VRKYVRTAEN…KFIISLAEVE (73 aa).

Belongs to the universal ribosomal protein uS3 family. Part of the 30S ribosomal subunit.

It is found in the plastid. Its subcellular location is the chloroplast. The chain is Small ribosomal subunit protein uS3c (rps3) from Staurastrum punctulatum (Green alga).